Reading from the N-terminus, the 350-residue chain is Nicotinate-nucleotide--dimethylbenzimidazole phosphoribosyltransferase (350 aa).

E316 acts as the Proton acceptor in catalysis.

Belongs to the CobT family.

It carries out the reaction 5,6-dimethylbenzimidazole + nicotinate beta-D-ribonucleotide = alpha-ribazole 5'-phosphate + nicotinate + H(+). It participates in nucleoside biosynthesis; alpha-ribazole biosynthesis; alpha-ribazole from 5,6-dimethylbenzimidazole: step 1/2. Its function is as follows. Catalyzes the synthesis of alpha-ribazole-5'-phosphate from nicotinate mononucleotide (NAMN) and 5,6-dimethylbenzimidazole (DMB). The protein is Nicotinate-nucleotide--dimethylbenzimidazole phosphoribosyltransferase of Bradyrhizobium diazoefficiens (strain JCM 10833 / BCRC 13528 / IAM 13628 / NBRC 14792 / USDA 110).